A 217-amino-acid chain; its full sequence is Adr-2-binding protein 1 (217 aa).

A disordered region spans residues 33–65 (ARPEPQHDSLKRRNTTSSIAKKKAKMTRGDEQI). Positions 44–58 (RRNTTSSIAKKKAKM) are enriched in basic residues.

Interacts with double-stranded RNA-specific adenosine deaminase adr-2. In terms of tissue distribution, expressed in main body hypodermal cells, the hypodermal seam cells, pharynx, intestine and some neurons.

The protein resides in the nucleus. Functionally, required for the A-I editing activity of the double-stranded RNA-specific adenosine deaminase adr-2 by facilitating adr-2 nuclear localization. This is Adr-2-binding protein 1 from Caenorhabditis elegans.